The primary structure comprises 346 residues: Methylthioribose-1-phosphate isomerase (346 aa).

Substrate is bound by residues 46–48 (RGA), Arg89, and Gln196. The active-site Proton donor is Asp237. 247–248 (NK) lines the substrate pocket.

Belongs to the eIF-2B alpha/beta/delta subunits family. MtnA subfamily.

It carries out the reaction 5-(methylsulfanyl)-alpha-D-ribose 1-phosphate = 5-(methylsulfanyl)-D-ribulose 1-phosphate. It functions in the pathway amino-acid biosynthesis; L-methionine biosynthesis via salvage pathway; L-methionine from S-methyl-5-thio-alpha-D-ribose 1-phosphate: step 1/6. In terms of biological role, catalyzes the interconversion of methylthioribose-1-phosphate (MTR-1-P) into methylthioribulose-1-phosphate (MTRu-1-P). The chain is Methylthioribose-1-phosphate isomerase from Geotalea daltonii (strain DSM 22248 / JCM 15807 / FRC-32) (Geobacter daltonii).